A 350-amino-acid chain; its full sequence is tRNA N6-adenosine threonylcarbamoyltransferase (350 aa).

Residues His-117 and His-121 each contribute to the Fe cation site. Residues 140–144 (LVSGG), Asp-173, Gly-186, and Asn-277 contribute to the substrate site. Residue Asp-305 participates in Fe cation binding.

It belongs to the KAE1 / TsaD family. Requires Fe(2+) as cofactor.

The protein localises to the cytoplasm. The enzyme catalyses L-threonylcarbamoyladenylate + adenosine(37) in tRNA = N(6)-L-threonylcarbamoyladenosine(37) in tRNA + AMP + H(+). In terms of biological role, required for the formation of a threonylcarbamoyl group on adenosine at position 37 (t(6)A37) in tRNAs that read codons beginning with adenine. Is involved in the transfer of the threonylcarbamoyl moiety of threonylcarbamoyl-AMP (TC-AMP) to the N6 group of A37, together with TsaE and TsaB. TsaD likely plays a direct catalytic role in this reaction. This Novosphingobium aromaticivorans (strain ATCC 700278 / DSM 12444 / CCUG 56034 / CIP 105152 / NBRC 16084 / F199) protein is tRNA N6-adenosine threonylcarbamoyltransferase.